The chain runs to 213 residues: Nicotinamidase (213 aa).

Residue D10 is the Proton acceptor of the active site. Zn(2+) is bound by residues D52, H54, and H86. K111 is an active-site residue. The Nucleophile role is filled by C156.

It belongs to the isochorismatase family.

It catalyses the reaction nicotinamide + H2O = nicotinate + NH4(+). It carries out the reaction pyrazinamide + H2O = pyrazine-2-carboxylate + NH4(+). It participates in cofactor biosynthesis; nicotinate biosynthesis; nicotinate from nicotinamide: step 1/1. Its function is as follows. Catalyzes the deamidation of nicotinamide (NAM) into nicotinate. Likely functions in the cyclical salvage pathway for production of NAD from nicotinamide. Is also able to hydrolyze the first-line antituberculous drug pyrazinamide (PZA) into pyrazinoic acid in vitro, but this reaction is not considered to be physiologically relevant. This is Nicotinamidase from Escherichia coli (strain K12).